The chain runs to 463 residues: Argininosuccinate lyase (463 aa).

This sequence belongs to the lyase 1 family. Argininosuccinate lyase subfamily.

The protein localises to the cytoplasm. The enzyme catalyses 2-(N(omega)-L-arginino)succinate = fumarate + L-arginine. Its pathway is amino-acid biosynthesis; L-arginine biosynthesis; L-arginine from L-ornithine and carbamoyl phosphate: step 3/3. The polypeptide is Argininosuccinate lyase (Prochlorococcus marinus (strain NATL2A)).